A 203-amino-acid chain; its full sequence is UPF0637 protein MCCL_0722 (203 aa).

The protein belongs to the UPF0637 family.

The chain is UPF0637 protein MCCL_0722 from Macrococcus caseolyticus (strain JCSC5402) (Macrococcoides caseolyticum).